A 194-amino-acid chain; its full sequence is MEQKTMSIELREKNGKGVARKLRAQDVVPGVVYGKGIEPVSVKVAAKDLAATIAGEGGLNSLITLSGGGSLNGNIVIVADMQRNPLKGDILHVDFHRISLDEKVKVHVPLVMVGTAAGVKEGGMLDVVTYSLDVECLPTAIPEAINVDVTNLAIGHSIHVSELVLPAGIKVLNDPETPIVSIHGKAKEEAPAAE.

Belongs to the bacterial ribosomal protein bL25 family. CTC subfamily. Part of the 50S ribosomal subunit; part of the 5S rRNA/L5/L18/L25 subcomplex. Contacts the 5S rRNA. Binds to the 5S rRNA independently of L5 and L18.

Functionally, this is one of the proteins that binds to the 5S RNA in the ribosome where it forms part of the central protuberance. The protein is Large ribosomal subunit protein bL25 of Geobacter sulfurreducens (strain ATCC 51573 / DSM 12127 / PCA).